An 867-amino-acid polypeptide reads, in one-letter code: Cation/H(+) antiporter 23, chloroplastic (867 aa).

12 helical membrane-spanning segments follow: residues 43–63, 75–95, 112–132, 146–166, 175–195, 212–232, 242–262, 283–303, 336–356, 362–382, 393–413, and 427–447; these read SGST…VANL, LYLP…PSVL, MVLE…LGLG, VIIA…LYYL, IISG…PDLA, AMCA…FGFA, KMMP…IFVI, HVWF…ACGV, GILM…GFML, FMMV…TVIT, AFAI…VLNA, and HMTI…AFAY. A disordered region spans residues 848 to 867; sequence SMYEDEDEDDEEDHQYGIHR. Residues 851-860 are compositionally biased toward acidic residues; the sequence is EDEDEDDEED.

Belongs to the monovalent cation:proton antiporter 2 (CPA2) transporter (TC 2.A.37) family. CHX (TC 2.A.37.4) subfamily. As to expression, specifically expressed in flower buds and pollen. Expressed in leaves, roots and stems.

The protein localises to the plastid. It localises to the chloroplast membrane. It is found in the endoplasmic reticulum membrane. Functionally, operates as a K(+)/H(+) antiporter or Na(+)/H(+) antiporter of the chloroplast envelope that functions in pH homeostasis and chloroplast development. Monovalent cation transporter with a preference for Cs(+), K(+) and Rb(+) relative to Na(+) or Li(+). Required for pollen tube guidance, but not for normal pollen development. May also be involved in the development or function of the female gametophyte. This Arabidopsis thaliana (Mouse-ear cress) protein is Cation/H(+) antiporter 23, chloroplastic (CHX23).